Consider the following 203-residue polypeptide: Small ribosomal subunit protein uS7A (203 aa).

This sequence belongs to the universal ribosomal protein uS7 family. As to quaternary structure, component of the small ribosomal subunit (SSU). Mature yeast ribosomes consist of a small (40S) and a large (60S) subunit. The 40S small subunit contains 1 molecule of ribosomal RNA (18S rRNA) and at least 33 different proteins. The large 60S subunit contains 3 rRNA molecules (25S, 5.8S and 5S rRNA) and at least 46 different proteins.

It localises to the cytoplasm. It is found in the nucleus. Its subcellular location is the nucleolus. Component of the ribosome, a large ribonucleoprotein complex responsible for the synthesis of proteins in the cell. The small ribosomal subunit (SSU) binds messenger RNAs (mRNAs) and translates the encoded message by selecting cognate aminoacyl-transfer RNA (tRNA) molecules. The large subunit (LSU) contains the ribosomal catalytic site termed the peptidyl transferase center (PTC), which catalyzes the formation of peptide bonds, thereby polymerizing the amino acids delivered by tRNAs into a polypeptide chain. The nascent polypeptides leave the ribosome through a tunnel in the LSU and interact with protein factors that function in enzymatic processing, targeting, and the membrane insertion of nascent chains at the exit of the ribosomal tunnel. The protein is Small ribosomal subunit protein uS7A (rps5) of Schizosaccharomyces pombe (strain 972 / ATCC 24843) (Fission yeast).